A 329-amino-acid chain; its full sequence is Palmitoyltransferase pfa3 (329 aa).

5 helical membrane passes run 14-34 (VLVI…MSGV), 49-69 (VGII…LTNL), 141-161 (FFFL…YSTF), 177-197 (AIYL…SIVM), and 243-263 (IMGK…GEGV). Positions 97-147 (RFCEKCQEYKCDRSHHCSQCNKCILRMDHHCMWFKNCVGFRNHKFFFLECF) constitute a DHHC domain.

Belongs to the DHHC palmitoyltransferase family. PFA3 subfamily. Autopalmitoylated.

It is found in the vacuole membrane. Its subcellular location is the golgi apparatus membrane. It carries out the reaction L-cysteinyl-[protein] + hexadecanoyl-CoA = S-hexadecanoyl-L-cysteinyl-[protein] + CoA. Its function is as follows. Palmitoyltransferase specific for VAC8. Palmitoylates VAC8 at one or more of its N-terminal cysteine residues, which is required for its proper membrane localization. This chain is Palmitoyltransferase pfa3 (pfa3), found in Schizosaccharomyces pombe (strain 972 / ATCC 24843) (Fission yeast).